The chain runs to 354 residues: Alkanal monooxygenase alpha chain (354 aa).

This sequence belongs to the bacterial luciferase oxidoreductase family. Heterodimer of an alpha and a beta chain.

The catalysed reaction is a long-chain fatty aldehyde + FMNH2 + O2 = a long-chain fatty acid + hnu + FMN + H2O + 2 H(+). Functionally, light-emitting reaction in luminous bacteria. This Photobacterium leiognathi protein is Alkanal monooxygenase alpha chain (luxA).